Consider the following 360-residue polypeptide: MLVWLANFLESYVSGFGVFQYLTLRAILGVLTALGLSMVLGPWVIRKLNELQIGQAIRDDGPQSHLSKSGTPTMGGTLILFSIVTATLLWADLSNRYVLAVLFVTITFGLIGWVDDYRKVVEKNSKGLPAKWKYFWQSACGFIVAIALFVTAQTPAETTLYIPFFKNVAWQMGVLYVFVTYLMIVGFSNAVNLTDGLDGLAIMPTVMVGSALGVIAYLVGNANFSEYLHIAFVPGSGELVVYCAALAGAGLGFLWFNTYPAQVFMGDVGALALGAALGVIAVIVRHEIVFFIMSGIFVMETVSVILQVGSYKLTGRRIFRMAPLHHHFELKGWPEPRVIVRFWIITVILVLFGLATLKIR.

The next 10 membrane-spanning stretches (helical) occupy residues 25 to 45 (RAIL…PWVI), 73 to 93 (TMGG…WADL), 97 to 117 (YVLA…VDDY), 132 to 152 (WKYF…FVTA), 168 to 188 (VAWQ…VGFS), 199 to 219 (GLAI…AYLV), 236 to 256 (SGEL…FLWF), 263 to 283 (VFMG…IAVI), 288 to 308 (IVFF…ILQV), and 339 to 359 (IVRF…TLKI).

It belongs to the glycosyltransferase 4 family. MraY subfamily. It depends on Mg(2+) as a cofactor.

The protein resides in the cell inner membrane. The enzyme catalyses UDP-N-acetyl-alpha-D-muramoyl-L-alanyl-gamma-D-glutamyl-meso-2,6-diaminopimeloyl-D-alanyl-D-alanine + di-trans,octa-cis-undecaprenyl phosphate = di-trans,octa-cis-undecaprenyl diphospho-N-acetyl-alpha-D-muramoyl-L-alanyl-D-glutamyl-meso-2,6-diaminopimeloyl-D-alanyl-D-alanine + UMP. It participates in cell wall biogenesis; peptidoglycan biosynthesis. Functionally, catalyzes the initial step of the lipid cycle reactions in the biosynthesis of the cell wall peptidoglycan: transfers peptidoglycan precursor phospho-MurNAc-pentapeptide from UDP-MurNAc-pentapeptide onto the lipid carrier undecaprenyl phosphate, yielding undecaprenyl-pyrophosphoryl-MurNAc-pentapeptide, known as lipid I. This chain is Phospho-N-acetylmuramoyl-pentapeptide-transferase, found in Teredinibacter turnerae (strain ATCC 39867 / T7901).